An 833-amino-acid chain; its full sequence is Zinc phosphodiesterase ELAC protein 2 homolog (833 aa).

Residues 1–19 constitute a mitochondrion transit peptide; sequence MLGAIARKTVENRILVSRH. The segment covering 624 to 646 has biased composition (pro residues); the sequence is LTPPGSPGGPPGKRPRLPSPHLP. A disordered region spans residues 624–652; that stretch reads LTPPGSPGGPPGKRPRLPSPHLPPSRDVL.

The protein belongs to the RNase Z family. In terms of assembly, homodimer. Zn(2+) is required as a cofactor. As to expression, highly expressed in the germline.

The protein localises to the mitochondrion. It is found in the nucleus. The catalysed reaction is Endonucleolytic cleavage of RNA, removing extra 3' nucleotides from tRNA precursor, generating 3' termini of tRNAs. A 3'-hydroxy group is left at the tRNA terminus and a 5'-phosphoryl group is left at the trailer molecule.. Its function is as follows. Zinc phosphodiesterase, which displays some tRNA 3'-processing endonuclease activity. Probably involved in tRNA maturation, by removing a 3'-trailer from precursor tRNA. Involved in germline proliferation. May be required for both mitosis and meiosis in germ cells. In terms of biological role, does not regulate the mitochondrial unfolded protein response following mitochondrial stress. Functionally, plays a role in mitochondrial unfolded protein response. Upon mitochondrial stress is exported from the nucleus where its tRNA endonuclease activity is negatively regulated. In response to mitochondrial stress, might be involved in activating a transcriptional response in an ATFS-1- and DVE-1-dependent manner. May play a role in negatively regulating the mitochondrial membrane potential. In Caenorhabditis elegans, this protein is Zinc phosphodiesterase ELAC protein 2 homolog.